A 385-amino-acid polypeptide reads, in one-letter code: Trans-enoyl reductase poxH (385 aa).

64 to 67 (QPYS) is an NADP(+) binding site. Position 156 to 163 (156 to 163 (PDPAAPPI)) interacts with substrate. NADP(+) is bound by residues 199–202 (STSV), 223–226 (SGTD), Y241, and 289–290 (LG). A substrate-binding site is contributed by 309-313 (HMAPL). Position 372 to 373 (372 to 373 (KR)) interacts with NADP(+).

The protein belongs to the zinc-containing alcohol dehydrogenase family. As to quaternary structure, monomer.

The protein operates within secondary metabolite biosynthesis. Its function is as follows. Trans-enoyl reductase; part of the gene cluster that mediates the biosynthesis of oxaleimides, cytotoxic compounds containing an unusual disubstituted succinimide moiety. The first step of the pathway is provided by the HR-PKS poxF that serves in a new mode of collaborative biosynthesis with the PKS-NRPS poxE, by providing the olefin containing amino acid substrate via the synthesis of an ACP-bound dec-4-enoate. The cytochrome P450 monooxygenase poxM-catalyzed oxidation at the alpha-position creates the enzyme-bound 2-hydroxydec-4-enoyl-ACP thioester, which may be prone to spontaneous hydrolysis to yield 2-hydroxydec-4-enoic acid due to increased electrophilicity of the carbonyl. 2-hydroxydec-4-enoic acid can then be further oxidized by poxM to yield the alpha-ketoacid 2-oxodec-4-enoicacid, which is reductively aminated by the aminotransferase poxL to yield (S,E)-2-aminodec-4-enoic acid. The Hybrid PKS-NRPS synthetase poxE then performs condensation between the octaketide product of its PKS modules and the amino group of (S,E)-2-aminodec-4-enoic acid which is activated and incorporated by the adenylation domain. The resulting aminoacyl product can be cyclized by the Diels-Alderase PoxQ and reductively released by the reductive (R) domain of poxE to yield an aldehyde intermediate. The released aldehyde is then substrate for a Knoevenagel condensation by the hydrolyase poxO followed by an oxidation at the 5-position of the pyrrolidone ring. The presence of the olefin from the amino acid building block allows for migration of the substituted allyl group to occur. This allylic transposition reaction takes place in a conjugate addition, semipinacol-like fashion to yield a succinimide intermediate. Iterative two-electron oxidations of the C7 methyl of the succinimide intermediate to the carboxylic acid can be catalyzed by one of two remaining cytochrome P450 monooxygenasess poxC or poxD to yield oxaleimide A. Subsequent oxidation yields the maleimide scaffold oxaleimide I. Both oxaleimide A and oxaleimide I can undergo oxidative modifications in the decalin ring to yield the series of products oxaleimides B to H. This Penicillium oxalicum (strain 114-2 / CGMCC 5302) (Penicillium decumbens) protein is Trans-enoyl reductase poxH.